The primary structure comprises 153 residues: Coiled-coil domain-containing protein 182 (153 aa).

Residues 46 to 109 (ADLEILQQKV…RLREEEDRGI (64 aa)) are a coiled coil.

This chain is Coiled-coil domain-containing protein 182 (CCDC182), found in Homo sapiens (Human).